The chain runs to 467 residues: MSEPNGWVELDVPEPDAEEFTGPQPVVAVVGRPNVGKSTLVNRLIGRRQAVVEDVPGVTRDRVPYDAQWNGRQFAVVDTGGWEPDAKDRAAAIAAQAETAVTTADVVLFVVDAVVGATDVDESAVKMLRRSAKPVILVANKADNSSIEMEAATLWSLGLGEPYPVSALHGRGSGELLDVIMDRLPEAPKIIEDRPRGPRRVALVGRPNVGKSSLLNRFSGEVRAVVDAVAGTTVDPVDSLVEIGGEAWQLVDTAGLRKRVGKASGTEYYASLRTASAIEAAEVAVVLLDASEVISEQDQRILSMVTDAGRALVIAFNKWDLVDADRRYYLDREIERELRRIPWAIRLNLSAKTGRAVDKLAPALRKALASWETRVPTAQLNAWLTALVQATPHPVRGGRAPKILFATQAGAAPPRFVLFTSGPLDAGYQRFVERKLREEFGFEGSPIEIAVRPRKKVGPGGRGKAHG.

EngA-type G domains lie at 25–188 (PVVA…PEAP) and 199–372 (RRVA…ASWE). GTP contacts are provided by residues 31–38 (GRPNVGKS), 78–82 (DTGGW), 140–143 (NKAD), 205–212 (GRPNVGKS), 252–256 (DTAGL), and 317–320 (NKWD). Residues 373 to 455 (TRVPTAQLNA…PIEIAVRPRK (83 aa)) enclose the KH-like domain.

Belongs to the TRAFAC class TrmE-Era-EngA-EngB-Septin-like GTPase superfamily. EngA (Der) GTPase family. As to quaternary structure, associates with the 50S ribosomal subunit.

Its function is as follows. GTPase that plays an essential role in the late steps of ribosome biogenesis. In Salinispora arenicola (strain CNS-205), this protein is GTPase Der.